Reading from the N-terminus, the 369-residue chain is Glycolate oxidase 1 (369 aa).

The FMN hydroxy acid dehydrogenase domain occupies 1 to 360 (MGEITNVMEY…TRAHIYTDAD (360 aa)). Y25 serves as a coordination point for glyoxylate. Residues 78 to 80 (PSA), S107, 128 to 130 (QLY), and T156 each bind FMN. A glyoxylate-binding site is contributed by Y130. Residue R165 coordinates glyoxylate. Residues K231 and S253 each contribute to the FMN site. Glyoxylate contacts are provided by H255 and R258. H255 acts as the Proton acceptor in catalysis. FMN-binding positions include 286-290 (DGGVR) and 309-310 (GR). A Microbody targeting signal motif is present at residues 367–369 (PRL).

This sequence belongs to the FMN-dependent alpha-hydroxy acid dehydrogenase family. In terms of assembly, homotetramer. Interacts with rice dwarf virus (RDV) P8. This interaction promotes viral P8 relocation to virus factories peripheral to peroxisomes. FMN serves as cofactor.

It is found in the peroxisome. It catalyses the reaction glycolate + O2 = glyoxylate + H2O2. Its pathway is photosynthesis; photorespiration; glycine from 2-phosphoglycolate: step 2/3. Catalyzes the oxidation of glycolate to glyoxylate, with a reduction of O2 to H2O2. Is a key enzyme in photorespiration in plants. Can exert a strong regulation over photosynthesis, possibly through a feed-back inhibition on Rubisco activase. Does not seem to play a role in oxalate accumulation. In Oryza sativa subsp. indica (Rice), this protein is Glycolate oxidase 1 (GLO1).